A 740-amino-acid chain; its full sequence is Alpha-1,6-mannosylglycoprotein 6-beta-N-acetylglucosaminyltransferase A (740 aa).

Over 1–13 the chain is Cytoplasmic; the sequence is MAFFSPWKLSSQK. The chain crosses the membrane as a helical; Signal-anchor for type II membrane protein span at residues 14 to 30; it reads LGFFLVTFGFIWGMMLL. Residues 31–740 are Lumenal-facing; sequence HFTIQQRTQP…GQVALCKDCL (710 aa). Asn-109, Asn-114, and Asn-117 each carry an N-linked (GlcNAc...) asparagine glycan. 9 disulfides stabilise this stretch: Cys-144–Cys-182, Cys-155–Cys-195, Cys-171–Cys-337, Cys-371–Cys-625, Cys-648–Cys-723, Cys-652–Cys-725, Cys-659–Cys-712, Cys-680–Cys-701, and Cys-736–Cys-739. The segment at 212–740 is sufficient for catalytic activity; the sequence is NSLAEIRTDF…GQVALCKDCL (529 aa). Asn-333 is a glycosylation site (N-linked (GlcNAc...) asparagine). 377-378 contributes to the substrate binding site; the sequence is DS. 2 N-linked (GlcNAc...) asparagine glycosylation sites follow: Asn-432 and Asn-446. A UDP-N-acetyl-alpha-D-glucosamine-binding site is contributed by Glu-525. Lys-553 contributes to the substrate binding site.

It belongs to the glycosyltransferase 18 family. N-glycosylated. Post-translationally, a secreted form is released from the membrane after cleavage by gamma-secretase. As to expression, detected in cerebellum.

The protein resides in the golgi apparatus membrane. The protein localises to the perikaryon. Its subcellular location is the secreted. The enzyme catalyses N(4)-{beta-D-GlcNAc-(1-&gt;2)-[beta-D-GlcNAc-(1-&gt;4)]-alpha-D-Man-(1-&gt;3)-[beta-D-GlcNAc-(1-&gt;2)-alpha-D-Man-(1-&gt;6)]-beta-D-Man-(1-&gt;4)-beta-D-GlcNAc-(1-&gt;4)-beta-D-GlcNAc}-L-asparaginyl-[protein] + UDP-N-acetyl-alpha-D-glucosamine = N(4)-{beta-D-GlcNAc-(1-&gt;2)-[beta-D-GlcNAc-(1-&gt;4)]-alpha-D-Man-(1-&gt;3)-[beta-D-GlcNAc-(1-&gt;2)-[beta-D-GlcNAc-(1-&gt;6)]-alpha-D-Man-(1-&gt;6)]-beta-D-Man-(1-&gt;4)-beta-D-GlcNAc-(1-&gt;4)-beta-D-GlcNAc}-L-asparaginyl-[protein] + UDP + H(+). It participates in protein modification; protein glycosylation. Its function is as follows. Catalyzes the addition of N-acetylglucosamine (GlcNAc) in beta 1-6 linkage to the alpha-linked mannose of biantennary N-linked oligosaccharides. Catalyzes an important step in the biosynthesis of branched, complex-type N-glycans, such as those found on EGFR, TGFR (TGF-beta receptor) and CDH2. Via its role in the biosynthesis of complex N-glycans, plays an important role in the activation of cellular signaling pathways, reorganization of the actin cytoskeleton, cell-cell adhesion and cell migration. MGAT5-dependent EGFR N-glycosylation enhances the interaction between EGFR and LGALS3 and thereby prevents rapid EGFR endocytosis and prolongs EGFR signaling. Required for efficient interaction between TGFB1 and its receptor. Enhances activation of intracellular signaling pathways by several types of growth factors, including FGF2, PDGF, IGF, TGFB1 and EGF. MGAT5-dependent CDH2 N-glycosylation inhibits CDH2-mediated homotypic cell-cell adhesion and contributes to the regulation of downstream signaling pathways. Promotes cell migration. Contributes to the regulation of the inflammatory response. MGAT5-dependent TCR N-glycosylation enhances the interaction between TCR and LGALS3, limits agonist-induced TCR clustering, and thereby dampens TCR-mediated responses to antigens. Required for normal leukocyte evasation and accumulation at sites of inflammation. Inhibits attachment of monocytes to the vascular endothelium and subsequent monocyte diapedesis. Functionally, promotes proliferation of umbilical vein endothelial cells and angiogenesis, at least in part by promoting the release of the growth factor FGF2 from the extracellular matrix. The polypeptide is Alpha-1,6-mannosylglycoprotein 6-beta-N-acetylglucosaminyltransferase A (Mgat5) (Mus musculus (Mouse)).